Here is a 147-residue protein sequence, read N- to C-terminus: MRIPVIRSPLEIRDTERKGRGVFALEPIPAQTCIEISPVLMFSKEEYEQHGQYTVLNEYTYVWSEGKQGLALGLGSMFNHDRHPNVYWKKDNRNNYISYYTLREIKTNEELCISYGDHLWFEDEASSASRISPNEENEDFPLQNISL.

Residues Ser-8 to Gly-116 enclose the SET domain.

It belongs to the class V-like SAM-binding methyltransferase superfamily. In terms of assembly, homodimer.

It localises to the cytoplasm. The protein localises to the nucleus. The catalysed reaction is L-lysyl(37)-[histone H3] + S-adenosyl-L-methionine = N(6)-methyl-L-lysyl(37)-[histone H3] + S-adenosyl-L-homocysteine + H(+). The enzyme catalyses N(6)-methyl-L-lysyl(37)-[histone H3] + S-adenosyl-L-methionine = N(6),N(6)-dimethyl-L-lysyl(37)-[histone H3] + S-adenosyl-L-homocysteine + H(+). It catalyses the reaction N(6),N(6)-dimethyl-L-lysyl(37)-[histone H3] + S-adenosyl-L-methionine = N(6),N(6),N(6)-trimethyl-L-lysyl(37)-[histone H3] + S-adenosyl-L-homocysteine + H(+). Functionally, histone lysine methyltransferase that specifically mono-, di-, and trimethylates 'Lys-37' of histone H3 to regulate sporulation. In Schizosaccharomyces pombe (strain 972 / ATCC 24843) (Fission yeast), this protein is Histone-lysine N-methyltransferase, H3 lysine-37 specific.